Here is a 298-residue protein sequence, read N- to C-terminus: Probable pyridoxal 5'-phosphate synthase subunit SNZ3 (298 aa).

Aspartate 21 serves as a coordination point for D-ribose 5-phosphate. Residue lysine 78 is the Schiff-base intermediate with D-ribose 5-phosphate of the active site. Residues glycine 150, glycine 213, and 234–235 each bind D-ribose 5-phosphate; that span reads GS.

This sequence belongs to the PdxS/SNZ family. As to quaternary structure, homohexamer. Interacts with THI11.

It carries out the reaction aldehydo-D-ribose 5-phosphate + D-glyceraldehyde 3-phosphate + L-glutamine = pyridoxal 5'-phosphate + L-glutamate + phosphate + 3 H2O + H(+). It functions in the pathway cofactor biosynthesis; pyridoxal 5'-phosphate biosynthesis. Catalyzes the formation of pyridoxal 5'-phosphate from ribose 5-phosphate (RBP), glyceraldehyde 3-phosphate (G3P) and ammonia. The ammonia is provided by a SNO isoform. Can also use ribulose 5-phosphate and dihydroxyacetone phosphate as substrates, resulting from enzyme-catalyzed isomerization of RBP and G3P, respectively. The protein is Probable pyridoxal 5'-phosphate synthase subunit SNZ3 (SNZ3) of Saccharomyces cerevisiae (strain ATCC 204508 / S288c) (Baker's yeast).